Consider the following 149-residue polypeptide: D-aminoacyl-tRNA deacylase (149 aa).

Residues 137 to 138 (GP) carry the Gly-cisPro motif, important for rejection of L-amino acids motif.

Belongs to the DTD family. As to quaternary structure, homodimer.

It is found in the cytoplasm. It catalyses the reaction glycyl-tRNA(Ala) + H2O = tRNA(Ala) + glycine + H(+). The catalysed reaction is a D-aminoacyl-tRNA + H2O = a tRNA + a D-alpha-amino acid + H(+). In terms of biological role, an aminoacyl-tRNA editing enzyme that deacylates mischarged D-aminoacyl-tRNAs. Also deacylates mischarged glycyl-tRNA(Ala), protecting cells against glycine mischarging by AlaRS. Acts via tRNA-based rather than protein-based catalysis; rejects L-amino acids rather than detecting D-amino acids in the active site. By recycling D-aminoacyl-tRNA to D-amino acids and free tRNA molecules, this enzyme counteracts the toxicity associated with the formation of D-aminoacyl-tRNA entities in vivo and helps enforce protein L-homochirality. The sequence is that of D-aminoacyl-tRNA deacylase from Clostridium acetobutylicum (strain ATCC 824 / DSM 792 / JCM 1419 / IAM 19013 / LMG 5710 / NBRC 13948 / NRRL B-527 / VKM B-1787 / 2291 / W).